Consider the following 65-residue polypeptide: Kappa-scoloptoxin(04)-Ssd1a (65 aa).

The signal sequence occupies residues 1 to 24 (MKKTCVVSVFLVLLLLKFHDLSMG). A propeptide spanning residues 25 to 36 (EEISPLKKVAPR) is cleaved from the precursor. Cystine bridges form between cysteine 42/cysteine 53 and cysteine 47/cysteine 60.

As to expression, expressed by the venom gland.

The protein resides in the secreted. In terms of biological role, voltage-gated potassium channel inhibitor. The polypeptide is Kappa-scoloptoxin(04)-Ssd1a (Scolopendra dehaani (Thai centipede)).